The chain runs to 287 residues: 4,4'-diapophytoene synthase (287 aa).

Residues 18–21, Tyr-41, and Arg-45 contribute to the (2E,6E)-farnesyl diphosphate site; that span reads HSKS. Asp-48 and Asp-52 together coordinate Mg(2+). Residue Gln-165 coordinates (2E,6E)-farnesyl diphosphate. Asn-168 is a binding site for Mg(2+). Residue Arg-171 participates in (2E,6E)-farnesyl diphosphate binding. Asp-172 serves as a coordination point for Mg(2+). Tyr-248 is a (2E,6E)-farnesyl diphosphate binding site.

Belongs to the phytoene/squalene synthase family. CrtM subfamily. Mg(2+) serves as cofactor.

The catalysed reaction is 2 (2E,6E)-farnesyl diphosphate = 15-cis-4,4'-diapophytoene + 2 diphosphate. Its pathway is carotenoid biosynthesis; staphyloxanthin biosynthesis; staphyloxanthin from farnesyl diphosphate: step 1/5. Its function is as follows. Involved in the biosynthesis of the yellow-orange carotenoid staphyloxanthin, which plays a role in the virulence via its protective function against oxidative stress. Catalyzes the head-to-head condensation of two molecules of farnesyl diphosphate (FPP) into the colorless C(30) carotenoid 4,4'-diapophytoene (dehydrosqualene). This Staphylococcus aureus (strain bovine RF122 / ET3-1) protein is 4,4'-diapophytoene synthase (crtM).